Reading from the N-terminus, the 195-residue chain is Large ribosomal subunit protein uL18 (195 aa).

Belongs to the universal ribosomal protein uL18 family. Part of the 50S ribosomal subunit. Contacts the 5S and 23S rRNAs.

Its function is as follows. This is one of the proteins that bind and probably mediate the attachment of the 5S RNA into the large ribosomal subunit, where it forms part of the central protuberance. In Nanoarchaeum equitans (strain Kin4-M), this protein is Large ribosomal subunit protein uL18.